The sequence spans 106 residues: ATP-dependent Clp protease adapter protein ClpS (106 aa).

It belongs to the ClpS family. As to quaternary structure, binds to the N-terminal domain of the chaperone ClpA.

Involved in the modulation of the specificity of the ClpAP-mediated ATP-dependent protein degradation. The protein is ATP-dependent Clp protease adapter protein ClpS of Vibrio parahaemolyticus serotype O3:K6 (strain RIMD 2210633).